Consider the following 330-residue polypeptide: tRNA-modifying protein YgfZ (330 aa).

Residues tryptophan 28 and tryptophan 192 each coordinate folate.

The protein belongs to the tRNA-modifying YgfZ family.

Its subcellular location is the cytoplasm. Its function is as follows. Folate-binding protein involved in regulating the level of ATP-DnaA and in the modification of some tRNAs. It is probably a key factor in regulatory networks that act via tRNA modification, such as initiation of chromosomal replication. The sequence is that of tRNA-modifying protein YgfZ from Blochmanniella pennsylvanica (strain BPEN).